Here is a 427-residue protein sequence, read N- to C-terminus: Adenylosuccinate synthetase (427 aa).

Residues 12 to 18 (GDEGKGK) and 40 to 42 (GHT) contribute to the GTP site. D13 (proton acceptor) is an active-site residue. 2 residues coordinate Mg(2+): D13 and G40. IMP contacts are provided by residues 13-16 (DEGK), 38-41 (NAGH), T128, R142, Q223, T238, and R302. The active-site Proton donor is the H41. 298-304 (VTTGRAR) provides a ligand contact to substrate. GTP is bound by residues R304, 330-332 (KLD), and 412-414 (GVG).

This sequence belongs to the adenylosuccinate synthetase family. As to quaternary structure, homodimer. Mg(2+) is required as a cofactor.

It is found in the cytoplasm. The enzyme catalyses IMP + L-aspartate + GTP = N(6)-(1,2-dicarboxyethyl)-AMP + GDP + phosphate + 2 H(+). It functions in the pathway purine metabolism; AMP biosynthesis via de novo pathway; AMP from IMP: step 1/2. Functionally, plays an important role in the de novo pathway of purine nucleotide biosynthesis. Catalyzes the first committed step in the biosynthesis of AMP from IMP. This Parafrankia sp. (strain EAN1pec) protein is Adenylosuccinate synthetase.